The chain runs to 389 residues: 5-hydroxytryptamine receptor 1B (389 aa).

The segment at 1–27 (MEAAGAPCAPPPPAGSQTGAPPANLSS) is disordered. Residues 1–45 (MEAAGAPCAPPPPAGSQTGAPPANLSSAPHNCSAEGYIYQDSVAL) are Extracellular-facing. Polar residues predominate over residues 16–27 (SQTGAPPANLSS). N-linked (GlcNAc...) asparagine glycans are attached at residues N24 and N31. Residues 46–71 (PWKVLLVILLALITLATTLSNAFVIA) form a helical membrane-spanning segment. Topologically, residues 72–85 (TVYRTRKLHTPANY) are cytoplasmic. Residues 86 to 110 (LIASLAVTDLLVSILVMPISTMYTV) form a helical membrane-spanning segment. The Extracellular segment spans residues 111 to 118 (TGRWTLGQ). The helical transmembrane segment at 119 to 144 (VVCDLWLSSDITCCTASILHLCVIAL) threads the bilayer. C121 and C198 are joined by a disulfide. The ergotamine site is built by D128 and T133. A DRY motif; important for ligand-induced conformation changes and signaling motif is present at residues 145–147 (DRY). The Cytoplasmic segment spans residues 145–164 (DRYWAITDAVEYSAKRTPKR). Residues 165–183 (AAVMIALVWVFSISISLPP) traverse the membrane as a helical segment. Residues 184–204 (FFWRQAKAEEEVSDCVVNTDH) lie on the Extracellular side of the membrane. An ergotamine-binding site is contributed by V200. A helical membrane pass occupies residues 205–228 (ILYTVYSTVGAFYFPTLLLIALYG). Residues 229 to 314 (RIYVEARSRI…AARERKATKT (86 aa)) lie on the Cytoplasmic side of the membrane. A compositionally biased stretch (polar residues) spans 258-271 (DSPGSTSSVTSVNS). The disordered stretch occupies residues 258–281 (DSPGSTSSVTSVNSRAPDVPSESG). Residues 315–336 (LGIILGAFIVCWLPFFIISLVM) traverse the membrane as a helical segment. The Extracellular portion of the chain corresponds to 337-346 (PICKDACWFH). The helical transmembrane segment at 347–369 (LAIFDFFTWLGYLNSLINPIIYT) threads the bilayer. The NPxxY motif; important for ligand-induced conformation changes and signaling motif lies at 364-368 (NPIIY). The Cytoplasmic portion of the chain corresponds to 370-389 (MSNEDFKQAFHKLIRFKCAG). The S-palmitoyl cysteine moiety is linked to residue C387.

It belongs to the G-protein coupled receptor 1 family. Homodimer. Heterodimer with HTR1D. Phosphorylated. Desensitization of the receptor may be mediated by its phosphorylation. Post-translationally, palmitoylated.

It is found in the cell membrane. G-protein coupled receptor for 5-hydroxytryptamine (serotonin). Also functions as a receptor for ergot alkaloid derivatives, various anxiolytic and antidepressant drugs and other psychoactive substances, such as lysergic acid diethylamide (LSD). Ligand binding causes a conformation change that triggers signaling via guanine nucleotide-binding proteins (G proteins) and modulates the activity of downstream effectors, such as adenylate cyclase. HTR1B is coupled to G(i)/G(o) G alpha proteins and mediates inhibitory neurotransmission by inhibiting adenylate cyclase activity. Arrestin family members inhibit signaling via G proteins and mediate activation of alternative signaling pathways. Regulates the release of 5-hydroxytryptamine, dopamine and acetylcholine in the brain, and thereby affects neural activity, nociceptive processing, pain perception, mood and behavior. Besides, plays a role in vasoconstriction of cerebral arteries. The polypeptide is 5-hydroxytryptamine receptor 1B (HTR1B) (Canis lupus familiaris (Dog)).